A 168-amino-acid polypeptide reads, in one-letter code: GTP-dependent dephospho-CoA kinase (168 aa).

GTP-binding residues include D49, I50, V51, D68, K70, and E120.

This sequence belongs to the GTP-dependent DPCK family.

It catalyses the reaction 3'-dephospho-CoA + GTP = GDP + CoA + H(+). It participates in cofactor biosynthesis; coenzyme A biosynthesis. Its function is as follows. Catalyzes the GTP-dependent phosphorylation of the 3'-hydroxyl group of dephosphocoenzyme A to form coenzyme A (CoA). This chain is GTP-dependent dephospho-CoA kinase, found in Pyrobaculum islandicum (strain DSM 4184 / JCM 9189 / GEO3).